The following is an 849-amino-acid chain: uncharacterized protein (849 aa).

The next 2 helical transmembrane spans lie at 587–607 (VALGEALAAVTLAVGDFLGLF) and 620–640 (AGILTLLAAFESIYSFITGDW).

The protein resides in the cell membrane. This is an uncharacterized protein from Methanocaldococcus jannaschii (strain ATCC 43067 / DSM 2661 / JAL-1 / JCM 10045 / NBRC 100440) (Methanococcus jannaschii).